The following is a 288-amino-acid chain: Tryptophan 2,3-dioxygenase (288 aa).

Substrate contacts are provided by residues 57-61, Tyr-119, and Arg-123; that span reads FIIQH. A heme-binding site is contributed by His-246. Thr-260 is a binding site for substrate.

Belongs to the tryptophan 2,3-dioxygenase family. In terms of assembly, homotetramer. Heme serves as cofactor.

It catalyses the reaction L-tryptophan + O2 = N-formyl-L-kynurenine. The protein operates within amino-acid degradation; L-tryptophan degradation via kynurenine pathway; L-kynurenine from L-tryptophan: step 1/2. Heme-dependent dioxygenase that catalyzes the oxidative cleavage of the L-tryptophan (L-Trp) pyrrole ring and converts L-tryptophan to N-formyl-L-kynurenine. Catalyzes the oxidative cleavage of the indole moiety. The protein is Tryptophan 2,3-dioxygenase of Pseudomonas aeruginosa (strain ATCC 15692 / DSM 22644 / CIP 104116 / JCM 14847 / LMG 12228 / 1C / PRS 101 / PAO1).